The following is a 160-amino-acid chain: Small ribosomal subunit protein uS19 (160 aa).

It belongs to the universal ribosomal protein uS19 family.

Its function is as follows. Protein S19 forms a complex with S13 that binds strongly to the 16S ribosomal RNA. The chain is Small ribosomal subunit protein uS19 from Pyrobaculum islandicum (strain DSM 4184 / JCM 9189 / GEO3).